Reading from the N-terminus, the 275-residue chain is Interleukin-2 receptor subunit alpha (275 aa).

The N-terminal stretch at 1-21 (MEPSLLLWGILTFVVVHGHVT) is a signal peptide. The Sushi 1 domain occupies 22–84 (ELCDENPPDI…SWENQCRCIS (63 aa)). Topologically, residues 22–243 (ELCDENPPDI…ESFVFTTEYQ (222 aa)) are extracellular. Disulfide bonds link Cys24–Cys67, Cys49–Cys80, and Cys51–Cys82. 2 N-linked (GlcNAc...) asparagine glycosylation sites follow: Asn60 and Asn70. The tract at residues 91 to 118 (DGQIIPKPEEQKGKSPMGMQSQMQPTDQ) is disordered. Over residues 108 to 118 (GMQSQMQPTDQ) the composition is skewed to polar residues. In terms of domain architecture, Sushi 2 spans 123-186 (GHCREPPPWE…WTQPRLQCLS (64 aa)). Cystine bridges form between Cys125/Cys168 and Cys152/Cys184. The segment at 188 to 213 (RSDGWFPDDEEPQASTDAALGSDTSC) is disordered. Residues 244–262 (IAVAGCVLLLISIVLLSGL) traverse the membrane as a helical segment. At 263 to 275 (TWQRRWRKSRRTI) the chain is on the cytoplasmic side.

Non-covalent dimer of an alpha and a beta subunit. IL2R exists in 3 different forms: a high affinity dimer, an intermediate affinity monomer (beta subunit), and a low affinity monomer (alpha subunit). The high and intermediate affinity forms also associate with a gamma subunit.

The protein localises to the membrane. Functionally, receptor for interleukin-2. The receptor is involved in the regulation of immune tolerance by controlling regulatory T cells (TREGs) activity. TREGs suppress the activation and expansion of autoreactive T-cells. The protein is Interleukin-2 receptor subunit alpha (IL2RA) of Felis catus (Cat).